The sequence spans 944 residues: MALKSPAFRRKFPLLVTGGLLALQPLATSFVVAAEQFDCQVSAAGGWDCKPKATGNLPPRPVHPGAAAASSGAEAPGEVGEAQAEKPMLVTESKGRGLKSRSEDYSHLDWVPREKLTAAQLAETGPYCGGAYIEPTRPGMNDTTPKDESPTYINAKVSKYQQEQQIATLAGDVVMRQGSMQAEADEANLYQAENRGELKGNVKIRDNGSLVVGDEAQIQLDTGEARVDNAEYVMHKSHIRGNALYAKRAENAIIRLKDGTYTTCEPGSNAWQLKGNNITLNPATGFGTATNVTLRVKDFPVLYTPYIYFPIDDRRQSGFLPPSFSTSSDTGFMLVTPYYFNLAPNYDATLYPRYMAKRGMLMEGEFRYLTKSSEGQFGGAYLNDESDDRKLQTDYKKERWMVNWQHKGGLDERLMTEVDYTDISDPFYFQDLETDQIGVEKRDFVNQQGALNYRGDNYTARLNVHAYEMATISQITPYDKLPQVTFNGTLPFHPSGLDFGYETEAVRFERDLKNDLVFDKDGKPDESIGVVKDANGEVIGGRRIDESLRGIARANGTRLNAAPSISLPMEASYGFLTPKLKYVYTHYDLDLNSRGQAQAAQDSANPAYGTYNSAINRNVPIFSVDSGLYFDRNTQLFGTNYRQTLEPRLFYLYVPYKDQRDIPLFDTGETLFNYASLFRDNRFAGTDRIGDENKLSLGVTNRWIEDNGFQRQRFSIGQAYYFKDRKVQLPGIDYRTRKDSQSDVSPYALEYEYAFNRDWRFNSDFNWDPDSRSTRSGSAMFHYQPEDNPNKIVNLGYRYRNDTITYDSLTGAWKVGGGDYGSPGDANYIKDYYKIQQHDFSVIWPIVPQWSVIARWQHDYNRNRTLEAMGGFEYDSCCWKLRLINRYWLDYDDFSQATPTNEKGDHGVFLQVVLKGLGGVVGNKVESFLDQGIQGYRTREEQAY.

An N-terminal signal peptide occupies residues 1–33 (MALKSPAFRRKFPLLVTGGLLALQPLATSFVVA). The disordered stretch occupies residues 52–102 (KATGNLPPRPVHPGAAAASSGAEAPGEVGEAQAEKPMLVTESKGRGLKSRS). The segment covering 64–82 (PGAAAASSGAEAPGEVGEA) has biased composition (low complexity).

This sequence belongs to the LptD family. Component of the lipopolysaccharide transport and assembly complex. Interacts with LptE and LptA.

The protein resides in the cell outer membrane. Its function is as follows. Together with LptE, is involved in the assembly of lipopolysaccharide (LPS) at the surface of the outer membrane. This Pseudomonas entomophila (strain L48) protein is LPS-assembly protein LptD.